The sequence spans 60 residues: UPF0434 protein PM0859 (60 aa).

It belongs to the UPF0434 family.

The chain is UPF0434 protein PM0859 from Pasteurella multocida (strain Pm70).